We begin with the raw amino-acid sequence, 80 residues long: uncharacterized protein (80 aa).

2 consecutive transmembrane segments (helical) span residues 15–35 (ALGL…LSGV) and 45–65 (WFEM…WAMV).

It to H.influenzae HI_0974B.

Its subcellular location is the cell membrane. This is an uncharacterized protein from Escherichia coli (strain K12).